The primary structure comprises 841 residues: Phosphatidylglycerol lysyltransferase (841 aa).

The Cytoplasmic segment spans residues 1–8 (MTKELRSK). A helical transmembrane segment spans residues 9-29 (LFTILKIAFALTLFTIVAITL). The Extracellular portion of the chain corresponds to 30 to 52 (YKELSHINLKDAIKSFSKINRFW). The helical transmembrane segment at 53–73 (LVALFLSGGASIIVLSIYDVI) threads the bilayer. The Cytoplasmic segment spans residues 74 to 89 (LAKTLKLKIGLAKTIR). Residues 90-110 (IGYIVNALNAVVGFGGFIGAS) traverse the membrane as a helical segment. Over 111-129 (VRFLFYKNTTDDKKALFHT) the chain is Extracellular. The chain crosses the membrane as a helical span at residues 130-150 (ISIVLISMLTGLSLLSILVVI). The Cytoplasmic portion of the chain corresponds to 151–164 (HVFDISHIFTPYPW). The chain crosses the membrane as a helical span at residues 165–185 (VKWLMYVVALFLPIFVVFTII). Over 186–193 (KPVQKTHR) the chain is Extracellular. Residues 194–216 (LLGVYCTIVSGVEWFVAALVLYM) form a helical membrane-spanning segment. At 217–229 (SMAIVGVQIPFAT) the chain is on the cytoplasmic side. The chain crosses the membrane as a helical span at residues 230–250 (FMGIFILAALSGLISFIPGGF). Residues 251 to 270 (GTFDLVVLLGLKALNVNEEA) lie on the Extracellular side of the membrane. Residues 271–291 (IVLGLSLYRFAYYLFPVLIAL) form a helical membrane-spanning segment. Residues 292-336 (ILSTFEFRSTAKRYWEDSRILVPVKDMTSLLGSYQKDIIARIPSF) lie on the Cytoplasmic side of the membrane. Residues 337-357 (AIALLLLFTSLVFFLNNLTII) form a helical membrane-spanning segment. The Extracellular portion of the chain corresponds to 358–367 (YDGLYDPNHY). The helical transmembrane segment at 368–388 (IYYIIVSIHTCACLLLLLNVI) threads the bilayer. The Cytoplasmic portion of the chain corresponds to 389 to 392 (GVYK). The chain crosses the membrane as a helical span at residues 393–413 (LSKRAILFSIISVLFIFIATA). Over 414–415 (YT) the chain is Extracellular. A helical transmembrane segment spans residues 416 to 436 (YASFILLSWLTVIFILLLVFY). Residues 437-448 (RRARVIKRPFRY) are Cytoplasmic-facing. A helical transmembrane segment spans residues 449-469 (SKLLLSVITGAIILYINHLVI). Residues 470-489 (KSTFYSLEIYHIEMLTSILR) lie on the Extracellular side of the membrane. Residues 490 to 510 (YYFWITILLVAIIVGVIVWWF) form a helical membrane-spanning segment. The Cytoplasmic portion of the chain corresponds to 511–841 (EYRYRSSNSR…KVMRVIRKNN (331 aa)).

It belongs to the LPG synthase family.

Its subcellular location is the cell membrane. It catalyses the reaction L-lysyl-tRNA(Lys) + a 1,2-diacyl-sn-glycero-3-phospho-(1'-sn-glycerol) = a 1,2-diacyl-sn-glycero-3-phospho-1'-(3'-O-L-lysyl)-sn-glycerol + tRNA(Lys). Its function is as follows. Catalyzes the transfer of a lysyl group from L-lysyl-tRNA(Lys) to membrane-bound phosphatidylglycerol (PG), which produces lysylphosphatidylglycerol (LPG), a major component of the bacterial membrane with a positive net charge. LPG synthesis contributes to bacterial virulence as it is involved in the resistance mechanism against cationic antimicrobial peptides (CAMP) produces by the host's immune system (defensins, cathelicidins) and by the competing microorganisms (bacteriocins). In fact, the modification of anionic phosphatidylglycerol with positively charged L-lysine results in repulsion of the peptides. The protein is Phosphatidylglycerol lysyltransferase (mprF) of Staphylococcus xylosus.